The chain runs to 216 residues: Somatotropin (216 aa).

Residues 1 to 26 (MAADSQTPWLLTFSLLCLLWPQEAGA) form the signal peptide. Residue histidine 45 participates in Zn(2+) binding. A disulfide bridge connects residues cysteine 78 and cysteine 189. Position 131 is a phosphoserine (serine 131). Zn(2+) is bound at residue glutamate 198. Cysteine 206 and cysteine 214 are disulfide-bonded.

It belongs to the somatotropin/prolactin family.

The protein localises to the secreted. In terms of biological role, plays an important role in growth control. Its major role in stimulating body growth is to stimulate the liver and other tissues to secrete IGF1. It stimulates both the differentiation and proliferation of myoblasts. It also stimulates amino acid uptake and protein synthesis in muscle and other tissues. The protein is Somatotropin (Gh1) of Rattus norvegicus (Rat).